The sequence spans 787 residues: Endonuclease MutS2 (787 aa).

336–343 (GPNTGGKT) serves as a coordination point for ATP. The region spanning 712–787 (LDLRGVRYED…GNGATEVQFK (76 aa)) is the Smr domain.

This sequence belongs to the DNA mismatch repair MutS family. MutS2 subfamily. In terms of assembly, homodimer. Binds to stalled ribosomes, contacting rRNA.

Endonuclease that is involved in the suppression of homologous recombination and thus may have a key role in the control of bacterial genetic diversity. Its function is as follows. Acts as a ribosome collision sensor, splitting the ribosome into its 2 subunits. Detects stalled/collided 70S ribosomes which it binds and splits by an ATP-hydrolysis driven conformational change. Acts upstream of the ribosome quality control system (RQC), a ribosome-associated complex that mediates the extraction of incompletely synthesized nascent chains from stalled ribosomes and their subsequent degradation. Probably generates substrates for RQC. In Lactiplantibacillus plantarum (strain ATCC BAA-793 / NCIMB 8826 / WCFS1) (Lactobacillus plantarum), this protein is Endonuclease MutS2.